We begin with the raw amino-acid sequence, 357 residues long: Chorismate synthase (357 aa).

Arginine 47 serves as a coordination point for NADP(+). FMN contacts are provided by residues 123–125, glycine 281, 296–300, and arginine 324; these read RSS and KPTSS.

This sequence belongs to the chorismate synthase family. Homotetramer. FMNH2 is required as a cofactor.

It catalyses the reaction 5-O-(1-carboxyvinyl)-3-phosphoshikimate = chorismate + phosphate. The protein operates within metabolic intermediate biosynthesis; chorismate biosynthesis; chorismate from D-erythrose 4-phosphate and phosphoenolpyruvate: step 7/7. Catalyzes the anti-1,4-elimination of the C-3 phosphate and the C-6 proR hydrogen from 5-enolpyruvylshikimate-3-phosphate (EPSP) to yield chorismate, which is the branch point compound that serves as the starting substrate for the three terminal pathways of aromatic amino acid biosynthesis. This reaction introduces a second double bond into the aromatic ring system. The polypeptide is Chorismate synthase (Chlamydia muridarum (strain MoPn / Nigg)).